The sequence spans 660 residues: Probable E3 ubiquitin ligase complex SCF subunit sconB (660 aa).

The span at 1–13 shows a compositional bias: basic and acidic residues; that stretch reads MHNENSVLRDAKE. Disordered stretches follow at residues 1–34 and 86–108; these read MHNE…MTPY and LGTG…RRQA. In terms of domain architecture, F-box spans 175-221; it reads IDFITALPPEISFKILSYLDTASLCRAAQVSRGWKCLADDDVVWHRM. 7 WD repeats span residues 340–379, 381–419, 421–457, 459–500, 542–586, 587–626, and 629–660; these read GHTN…RTLT, HTSG…STYT, HLGG…TFLL, GHSD…RTFQ, SQVS…CLRT, FFGH…CERT, and GHSG…SFKN. Positions 521–553 are disordered; sequence GHDASHEEDSNASVSGDESPSSQVSCSPTAAFF. Residues 531-548 are compositionally biased toward polar residues; that stretch reads NASVSGDESPSSQVSCSP.

The protein belongs to the WD repeat MET30/SCONB/SCON-2 family. In terms of assembly, component of the SCF(sconB) E3 ubiquitin ligase complex.

It functions in the pathway protein modification; protein ubiquitination. Component of the SCF(sconB) E3 ubiquitin ligase complex involved in the regulation of sulfur metabolite repression, probably by mediating the inactivation or degradation of the metR transcription factor. The sequence is that of Probable E3 ubiquitin ligase complex SCF subunit sconB (sconB) from Talaromyces marneffei (strain ATCC 18224 / CBS 334.59 / QM 7333) (Penicillium marneffei).